The following is a 284-amino-acid chain: 2-dehydro-3-deoxyphosphooctonate aldolase (284 aa).

It belongs to the KdsA family.

The protein localises to the cytoplasm. The catalysed reaction is D-arabinose 5-phosphate + phosphoenolpyruvate + H2O = 3-deoxy-alpha-D-manno-2-octulosonate-8-phosphate + phosphate. Its pathway is carbohydrate biosynthesis; 3-deoxy-D-manno-octulosonate biosynthesis; 3-deoxy-D-manno-octulosonate from D-ribulose 5-phosphate: step 2/3. It participates in bacterial outer membrane biogenesis; lipopolysaccharide biosynthesis. This Erwinia tasmaniensis (strain DSM 17950 / CFBP 7177 / CIP 109463 / NCPPB 4357 / Et1/99) protein is 2-dehydro-3-deoxyphosphooctonate aldolase.